Reading from the N-terminus, the 243-residue chain is Nuclear cap-binding protein subunit 2 (243 aa).

MRNA-binding positions include Tyr-14, Tyr-37, 106 to 110, 117 to 121, and 127 to 128; these read RVDFD, RQWGR, and QV. The RRM domain maps to 34–112; it reads VTVYVGNMSF…RPIRVDFDWG (79 aa). Disordered stretches follow at residues 120 to 144 and 161 to 243; these read GRGR…GGYG and GGAF…RRRR. Basic and acidic residues-rich tracts occupy residues 128–138 and 173–228; these read VRDEYRTDYDP and DRGD…REKG.

The protein belongs to the RRM NCBP2 family. Component of the nuclear cap-binding complex (CBC), a heterodimer composed of ABH1/CBP80 and CBP20 that interacts with m7GpppG-capped RNA.

Its subcellular location is the nucleus. It localises to the cytoplasm. Component of the cap-binding complex (CBC), which binds co-transcriptionally to the 5' cap of pre-mRNAs and is involved in various processes such as pre-mRNA splicing and RNA-mediated gene silencing (RNAi) by microRNAs (miRNAs). The CBC complex is involved in miRNA-mediated RNA interference and is required for primary miRNA processing. In the CBC complex, CBP20 recognizes and binds capped RNAs (m7GpppG-capped RNA) but requires ABH1/CBP80 to stabilize the movement of its N-terminal loop and lock the CBC into a high affinity cap-binding state with the cap structure. CBP20 also plays a role in stabilization of ABH1/CBP80 and ABH1/CBP80 localization to the nucleus. The sequence is that of Nuclear cap-binding protein subunit 2 (CBP20) from Oryza sativa subsp. japonica (Rice).